Here is a 731-residue protein sequence, read N- to C-terminus: Catalase-peroxidase (731 aa).

The segment at 1–24 is disordered; that stretch reads MSTEPNCPFSGNARKHTAAGAPSN. The segment at residues 96 to 219 is a cross-link (tryptophyl-tyrosyl-methioninium (Trp-Tyr) (with M-245)); sequence WHSAGTYRVS…LGAVQMGLIY (124 aa). Histidine 97 functions as the Proton acceptor in the catalytic mechanism. Residues 219 to 245 constitute a cross-link (tryptophyl-tyrosyl-methioninium (Tyr-Met) (with W-96)); that stretch reads YVNPEGPNGNPDPIAAARDIRETFARM. A heme b-binding site is contributed by histidine 260. A disordered region spans residues 339–365; sequence GAQQWKPKGDAGAGTVPDAHDPSKRHA.

Belongs to the peroxidase family. Peroxidase/catalase subfamily. Homodimer or homotetramer. It depends on heme b as a cofactor. Post-translationally, formation of the three residue Trp-Tyr-Met cross-link is important for the catalase, but not the peroxidase activity of the enzyme.

The catalysed reaction is H2O2 + AH2 = A + 2 H2O. It carries out the reaction 2 H2O2 = O2 + 2 H2O. Bifunctional enzyme with both catalase and broad-spectrum peroxidase activity. This is Catalase-peroxidase from Polaromonas sp. (strain JS666 / ATCC BAA-500).